The chain runs to 299 residues: ATP phosphoribosyltransferase (299 aa).

This sequence belongs to the ATP phosphoribosyltransferase family. Long subfamily. Equilibrium between an active dimeric form, an inactive hexameric form and higher aggregates. Interconversion between the various forms is largely reversible and is influenced by the natural substrates and inhibitors of the enzyme. Requires Mg(2+) as cofactor.

The protein resides in the cytoplasm. The enzyme catalyses 1-(5-phospho-beta-D-ribosyl)-ATP + diphosphate = 5-phospho-alpha-D-ribose 1-diphosphate + ATP. It participates in amino-acid biosynthesis; L-histidine biosynthesis; L-histidine from 5-phospho-alpha-D-ribose 1-diphosphate: step 1/9. With respect to regulation, feedback inhibited by histidine. Functionally, catalyzes the condensation of ATP and 5-phosphoribose 1-diphosphate to form N'-(5'-phosphoribosyl)-ATP (PR-ATP). Has a crucial role in the pathway because the rate of histidine biosynthesis seems to be controlled primarily by regulation of HisG enzymatic activity. This is ATP phosphoribosyltransferase from Pectobacterium carotovorum subsp. carotovorum (strain PC1).